The following is a 142-amino-acid chain: Large ribosomal subunit protein uL11 (142 aa).

Belongs to the universal ribosomal protein uL11 family. As to quaternary structure, part of the ribosomal stalk of the 50S ribosomal subunit. Interacts with L10 and the large rRNA to form the base of the stalk. L10 forms an elongated spine to which L12 dimers bind in a sequential fashion forming a multimeric L10(L12)X complex. In terms of processing, one or more lysine residues are methylated.

In terms of biological role, forms part of the ribosomal stalk which helps the ribosome interact with GTP-bound translation factors. The polypeptide is Large ribosomal subunit protein uL11 (Rhodospirillum rubrum (strain ATCC 11170 / ATH 1.1.1 / DSM 467 / LMG 4362 / NCIMB 8255 / S1)).